Here is a 246-residue protein sequence, read N- to C-terminus: DNA repair protein RecO (246 aa).

This sequence belongs to the RecO family.

Functionally, involved in DNA repair and RecF pathway recombination. The sequence is that of DNA repair protein RecO from Methylobacterium nodulans (strain LMG 21967 / CNCM I-2342 / ORS 2060).